A 309-amino-acid chain; its full sequence is Foldase protein PrsA (309 aa).

The signal sequence occupies residues 1–22; that stretch reads MKTRSKLAAGFLTLMSVATLAA. C23 is lipidated: N-palmitoyl cysteine. C23 carries the S-diacylglycerol cysteine lipid modification. Residues 146 to 241 form the PpiC domain; it reads TPETSVQVIK…TSYYIIKVTD (96 aa).

The protein belongs to the PrsA family.

The protein resides in the cell membrane. It carries out the reaction [protein]-peptidylproline (omega=180) = [protein]-peptidylproline (omega=0). In terms of biological role, plays a major role in protein secretion by helping the post-translocational extracellular folding of several secreted proteins. The sequence is that of Foldase protein PrsA from Streptococcus agalactiae serotype Ia (strain ATCC 27591 / A909 / CDC SS700).